Consider the following 567-residue polypeptide: Berberine bridge enzyme-like D-1 (567 aa).

Positions 1–33 (MKRNISMFLQLLLIILMMISFLFTSLLVPSVSA) are cleaved as a signal peptide. An intrachain disulfide couples Cys-42 to Cys-103. N-linked (GlcNAc...) asparagine glycosylation is present at Asn-50. In terms of domain architecture, FAD-binding PCMH-type spans 81-257 (SKPKPTVIIV…YAWKIRLLKV (177 aa)). His-118 is modified (pros-8alpha-FAD histidine). N-linked (GlcNAc...) asparagine glycans are attached at residues Asn-364 and Asn-378.

The protein belongs to the oxygen-dependent FAD-linked oxidoreductase family. Requires FAD as cofactor. As to expression, mostly expressed in roots at low levels.

The protein resides in the vacuole. It participates in alkaloid biosynthesis; nicotine biosynthesis. Involved in the biosynthesis of pyridine alkaloid natural products, leading mainly to the production of anabasine, anatabine, nicotine and nornicotine, effective deterrents against herbivores with antiparasitic and pesticide properties (neurotoxins); nornicotine serves as the precursor in the synthesis of the carcinogen compound N'-nitrosonornicotine (NNN). Catalyzes a late oxidation step subsequent to the pyridine ring condensation reaction in the biosynthesis of alkaloids. This Nicotiana tabacum (Common tobacco) protein is Berberine bridge enzyme-like D-1.